A 101-amino-acid polypeptide reads, in one-letter code: Gastrin (101 aa).

Residues 1 to 21 (MPRLCVYMLVLVLALATFSEA) form the signal peptide. Residues 23–101 (WKPRSQLQDA…FGRRSAEEDQ (79 aa)) are disordered. Over residues 25–37 (PRSQLQDASSGPG) the composition is skewed to polar residues. A Sulfotyrosine modification is found at tyrosine 87. Phenylalanine 92 is subject to Phenylalanine amide. Basic and acidic residues predominate over residues 92 to 101 (FGRRSAEEDQ). A Phosphoserine modification is found at serine 96. A propeptide spanning residues 96–101 (SAEEDQ) is cleaved from the precursor.

This sequence belongs to the gastrin/cholecystokinin family. Post-translationally, sulfation enhances proteolytic processing, and blocks peptide degradation. Levels of sulfation differ between proteolytically-cleaved gastrins and between tissues. As to expression, abundantly expressed in the stomach and duodenum. Low levels in brain, ovary and pancreas.

It is found in the secreted. Its function is as follows. Gastrin stimulates the stomach mucosa to produce and secrete hydrochloric acid and the pancreas to secrete its digestive enzymes. It also stimulates smooth muscle contraction and increases blood circulation and water secretion in the stomach and intestine. The protein is Gastrin (Gast) of Mus musculus (Mouse).